We begin with the raw amino-acid sequence, 219 residues long: Thymidylate kinase (219 aa).

9 to 16 contributes to the ATP binding site; the sequence is GIEGCGKT.

This sequence belongs to the thymidylate kinase family.

The enzyme catalyses dTMP + ATP = dTDP + ADP. Its function is as follows. Phosphorylation of dTMP to form dTDP in both de novo and salvage pathways of dTTP synthesis. The polypeptide is Thymidylate kinase (Syntrophus aciditrophicus (strain SB)).